A 135-amino-acid polypeptide reads, in one-letter code: Rheacalcin-1 (135 aa).

Cystine bridges form between C6-C17, C34-C131, and C106-C123. The C-type lectin domain maps to 13-132; it reads FRGNCYGYFR…CSERNAFICK (120 aa).

It localises to the secreted. Its subcellular location is the extracellular space. The protein localises to the extracellular matrix. The sequence is that of Rheacalcin-1 from Rhea americana (Greater rhea).